Here is a 461-residue protein sequence, read N- to C-terminus: Cysteine--tRNA ligase (461 aa).

C29 contributes to the Zn(2+) binding site. Residues 31-41 carry the 'HIGH' region motif; sequence MTIYDLCHVGH. 3 residues coordinate Zn(2+): C213, H238, and E242. The short motif at 274–278 is the 'KMSKS' region element; the sequence is KMSKS. An ATP-binding site is contributed by K277.

The protein belongs to the class-I aminoacyl-tRNA synthetase family. Monomer. Zn(2+) serves as cofactor.

Its subcellular location is the cytoplasm. The catalysed reaction is tRNA(Cys) + L-cysteine + ATP = L-cysteinyl-tRNA(Cys) + AMP + diphosphate. The polypeptide is Cysteine--tRNA ligase (Methylibium petroleiphilum (strain ATCC BAA-1232 / LMG 22953 / PM1)).